The primary structure comprises 215 residues: Protein Thf1 (215 aa).

Positions 182–213 form a coiled coil; the sequence is ERMDQAVELVEETIAAEKRKKERRLEEQAQRT.

The protein belongs to the THF1 family.

In terms of biological role, may be involved in photosynthetic membrane biogenesis. The chain is Protein Thf1 from Synechococcus sp. (strain CC9605).